The chain runs to 988 residues: DExH-box ATP-dependent RNA helicase DExH9 (988 aa).

Residues 1-27 form a disordered region; the sequence is MGSVKRKSVEESSDSAPPQKVQREDDS. Residues 76–232 form the Helicase ATP-binding domain; the sequence is IKCLDNGESV…WVAKVHQQPC (157 aa). 89 to 96 serves as a coordination point for ATP; that stretch reads AHTSAGKT. The short motif at 180–183 is the DEVH box element; sequence DEVH. The Helicase C-terminal domain occupies 307-509; sequence DIFKLVKMII…SYNMLLNQLR (203 aa).

The protein belongs to the DExH box helicase family. SKI2 subfamily. In terms of tissue distribution, ubiquitous but preferentially expressed in active tissues.

It localises to the nucleus. The protein localises to the nucleolus. It carries out the reaction ATP + H2O = ADP + phosphate + H(+). ATP-dependent RNA helicase that associates with the RNA exosome complex. Required for proper rRNA biogenesis and development. Involved in the 3'-processing of the 7S pre-RNA to the mature 5.8S rRNA and also in the removal of rRNA maturation by-products. This chain is DExH-box ATP-dependent RNA helicase DExH9, found in Arabidopsis thaliana (Mouse-ear cress).